Consider the following 430-residue polypeptide: Enolase (430 aa).

Q167 contributes to the (2R)-2-phosphoglycerate binding site. The Proton donor role is filled by E209. The Mg(2+) site is built by D246, E287, and D314. Residues K339, R368, S369, and K390 each coordinate (2R)-2-phosphoglycerate. K339 acts as the Proton acceptor in catalysis.

It belongs to the enolase family. Mg(2+) serves as cofactor.

The protein resides in the cytoplasm. It localises to the secreted. Its subcellular location is the cell surface. It carries out the reaction (2R)-2-phosphoglycerate = phosphoenolpyruvate + H2O. The protein operates within carbohydrate degradation; glycolysis; pyruvate from D-glyceraldehyde 3-phosphate: step 4/5. Catalyzes the reversible conversion of 2-phosphoglycerate (2-PG) into phosphoenolpyruvate (PEP). It is essential for the degradation of carbohydrates via glycolysis. The sequence is that of Enolase from Prochlorococcus marinus (strain MIT 9312).